The primary structure comprises 170 residues: Allophycocyanin subunit beta-18 (170 aa).

Asn-74 carries the N4-methylasparagine modification. Cys-84 contributes to the (2R,3E)-phycocyanobilin binding site.

Belongs to the phycobiliprotein family. As to quaternary structure, heterodimer of an alpha and a beta chain. Post-translationally, contains one covalently linked bilin chromophore.

It localises to the plastid. The protein resides in the chloroplast thylakoid membrane. In terms of biological role, light-harvesting photosynthetic bile pigment-protein from the phycobiliprotein complex. Allophycocyanin has a maximum absorption at approximately 650 nanometers. The polypeptide is Allophycocyanin subunit beta-18 (apcF) (Cyanidium caldarium (Red alga)).